Consider the following 676-residue polypeptide: MTLEEARKRVNELRDLIRYHNYRYYVLADPEISDAEYDRLLRELKELEERFPELKSPDSPTEQVGARPLEATFRPVRHPTRMYSLDNAFNFDELKAFEERIERALGREGPFAYTVEHKVDGLSVNLYYEDGVLVYGATRGDGEVGEEVTQNLLTIPTIPRRLKGVPERLEVRGEVYMPVEAFLRLNEELEERGERIFKNPRNAAAGSLRQKDPRITAKRGLRATFYALGLGLEEVEREGVATQFALLHWLKEKGFPVEHGYARAVGAEGVEAVYQDWLKKRRALPFEADGVVVKLDELALWRELGYTARAPRFAIAYKFPAEEKETRLLDVVFQVGRTGRVTPVGILEPVFLEGSEVSRVTLHNESYIEELDIRIGDWVLVHKAGGVIPEVLRVLKERRTGEERPIRWPETCPECGHRLLKEGKVHRCPNPLCPAKRFEAIRHFASRKAMDIQGLGEKLIERLLEKGLVKDVADLYRLRKEDLVGLERMGEKSAQNLLRQIEESKRRGLERLLYALGLPGVGEVLARNLAARFGNMDRLLEASLEELLEVEEVGELTARAILETLKDPAFRDLVRRLKEAGVEMEAKEKGGEALKGLTFVITGELSRPREEVKALLRRLGAKVTDSVSRKTSYLVVGENPGSKLEKARALGVPTLTEEELYRLLEARTGKKAEELV.

NAD(+) is bound by residues 34–38, 84–85, and glutamate 116; these read DAEYD and SL. Lysine 118 acts as the N6-AMP-lysine intermediate in catalysis. Residues arginine 139, glutamate 174, lysine 294, and lysine 318 each contribute to the NAD(+) site. The Zn(2+) site is built by cysteine 412, cysteine 415, cysteine 428, and cysteine 433. In terms of domain architecture, BRCT spans 589 to 676; it reads KGGEALKGLT…RTGKKAEELV (88 aa).

It belongs to the NAD-dependent DNA ligase family. LigA subfamily. Requires Mg(2+) as cofactor. Mn(2+) serves as cofactor.

It catalyses the reaction NAD(+) + (deoxyribonucleotide)n-3'-hydroxyl + 5'-phospho-(deoxyribonucleotide)m = (deoxyribonucleotide)n+m + AMP + beta-nicotinamide D-nucleotide.. DNA ligase that catalyzes the formation of phosphodiester linkages between 5'-phosphoryl and 3'-hydroxyl groups in double-stranded DNA using NAD as a coenzyme and as the energy source for the reaction. It is essential for DNA replication and repair of damaged DNA. This chain is DNA ligase, found in Thermus thermophilus (strain ATCC BAA-163 / DSM 7039 / HB27).